A 167-amino-acid chain; its full sequence is MVHIEKQISDLQEKLIAVNRVSKTVKGGRIFSFTALTVVGDSNGRVGFGYGKAREVPTAIQKAMDKARRNMTTIVLNSGGTLQHSIKGVHTGSRVFMQPASEGTGIIAGGAMRAVLEVTGIRNVLAKTYGSTNPINVVRATINALNKMKSPEMIAAKRGKTIEEILR.

Residues 11-74 (LQEKLIAVNR…DKARRNMTTI (64 aa)) enclose the S5 DRBM domain.

The protein belongs to the universal ribosomal protein uS5 family. In terms of assembly, part of the 30S ribosomal subunit. Contacts proteins S4 and S8.

In terms of biological role, with S4 and S12 plays an important role in translational accuracy. Functionally, located at the back of the 30S subunit body where it stabilizes the conformation of the head with respect to the body. In Baumannia cicadellinicola subsp. Homalodisca coagulata, this protein is Small ribosomal subunit protein uS5.